The following is a 435-amino-acid chain: Indole diterpene prenyltransferase atmD (435 aa).

L-tryptophan contacts are provided by residues Ala-81–Tyr-82 and Glu-90. Residues Arg-103, Lys-190, Arg-261, Lys-263, Tyr-265, Tyr-346, and Tyr-413 each contribute to the substrate site.

This sequence belongs to the tryptophan dimethylallyltransferase family.

Functionally, indole diterpene prenyltransferase; part of the ATM2 gene cluster that mediates the biosynthesis of aflatrem, a tremorgenic mycotoxin with acute neurotoxic effects. Synthesis of geranylgeranyl diphosphate (GGPP) by AtmG (a GGPP synthase) precedes condensation of GGPP with indole 3-glycerol phosphate, followed by epoxidation and cyclization by AtmM (a FAD-dependent monooxygenase) and AtmC (a prenyltransferase) to produce paspaline. AtmB is also essential for paspaline production, but its exact role has not been identified yet. AtmP, a cytochrome P450 monooxygenase, subsequently converts paspaline to 13-desoxypaxilline via PC-M6 by removal of the C-30 methyl group and oxidation at C-10. AtmQ, a cytochrome P450 monooxygenase, then catalyzes the oxidation of 13-desoxypaxilline, first at C-7 to produce paspalicine and then at C-13 to form paspalinine. Finally, AtmD prenylates paspalinine to form aflatrem. The chain is Indole diterpene prenyltransferase atmD from Aspergillus flavus.